A 409-amino-acid polypeptide reads, in one-letter code: MALINEHFLKLQNNYLFSDIAKKVNSFKVTHPKDKIIRMGIGDVTQPLAPAVIEAMHKAVEEMASKDTFHGYGPEQGYPFLIDAIIKNDYASRGVFIEPSEVFISDGAKSDCGNIGDMLRHDNSIGVTDPVYPVYIDSNVMSGRTGVLENGKWSDVVYIPCTAENNFVPDLPSRRVDILYLCYPNNPTGTTLTKDELKKWVNYALANDVLIMYDSAYEAYIQDPNIPHSIYEIKGAKKVAIEFRSFSKTAGFTGIRCGYTVVPKELNAFTLDGQRVQLNKLWNRRQCTKFNGTSYITQRGAEAVYSTAGKQQVTATINYYMTNAKIMKEGLQNCGLTVYGGDNAPYLWLKTPDGLSSWKFFDKLLYEVKIVGTPGVGFGPSGEGYLRLTAFGDRDDTLEAMARLRKWLR.

Substrate-binding residues include Tyr-15 and Gly-42. Pyridoxal 5'-phosphate is bound by residues Tyr-72, 108–109 (AK), Tyr-132, Asn-186, Tyr-217, and 245–247 (SFS). Substrate contacts are provided by Lys-109, Tyr-132, and Asn-186. Lys-248 bears the N6-(pyridoxal phosphate)lysine mark. The pyridoxal 5'-phosphate site is built by Arg-256 and Asn-291. Positions 291 and 387 each coordinate substrate.

This sequence belongs to the class-I pyridoxal-phosphate-dependent aminotransferase family. LL-diaminopimelate aminotransferase subfamily. Homodimer. The cofactor is pyridoxal 5'-phosphate.

The catalysed reaction is (2S,6S)-2,6-diaminopimelate + 2-oxoglutarate = (S)-2,3,4,5-tetrahydrodipicolinate + L-glutamate + H2O + H(+). Its pathway is amino-acid biosynthesis; L-lysine biosynthesis via DAP pathway; LL-2,6-diaminopimelate from (S)-tetrahydrodipicolinate (aminotransferase route): step 1/1. Functionally, involved in the synthesis of meso-diaminopimelate (m-DAP or DL-DAP), required for both lysine and peptidoglycan biosynthesis. Catalyzes the direct conversion of tetrahydrodipicolinate to LL-diaminopimelate. The sequence is that of LL-diaminopimelate aminotransferase from Parabacteroides distasonis (strain ATCC 8503 / DSM 20701 / CIP 104284 / JCM 5825 / NCTC 11152).